The chain runs to 219 residues: MNLNELKKKAAWAALDYIYPGTVIGVGTGSTVFYFIQALSTVKHLISGAVSSSNSSTVLLKKNGIRVLDLNTFDFLEIYVDSADEINNDMQMIKGGGAALTKEKIIAAMSKKFVCIIDESKKVNILGTFPLPIEIIPIAFSYISKEILKIGGQPKLRENIITDNGNVIIDVYNLFINDPISVEKKINSLPGVVSVGLFASRVADVVLIGTQKGVEIIKN.

Residues 28 to 31 (TGST), 81 to 84 (DSAD), and 94 to 97 (KGGG) each bind substrate. The active-site Proton acceptor is E103. K121 is a substrate binding site.

The protein belongs to the ribose 5-phosphate isomerase family. In terms of assembly, homodimer.

It catalyses the reaction aldehydo-D-ribose 5-phosphate = D-ribulose 5-phosphate. It functions in the pathway carbohydrate degradation; pentose phosphate pathway; D-ribose 5-phosphate from D-ribulose 5-phosphate (non-oxidative stage): step 1/1. Catalyzes the reversible conversion of ribose-5-phosphate to ribulose 5-phosphate. In Buchnera aphidicola subsp. Schizaphis graminum (strain Sg), this protein is Ribose-5-phosphate isomerase A.